Reading from the N-terminus, the 254-residue chain is Hydroxypyruvate/pyruvate aldolase (254 aa).

The Proton acceptor role is filled by H47. Positions 151 and 177 each coordinate a divalent metal cation.

This sequence belongs to the HpcH/HpaI aldolase family. Requires a divalent metal cation as cofactor.

The enzyme catalyses D-glyceraldehyde + pyruvate = 2-dehydro-3-deoxy-L-galactonate. Aldolase which can catalyze in vitro the aldolisation reaction between hydroxypyruvate (HPA) or pyruvate (PA) and D-glyceraldehyde (D-GA). The condensation of pyruvate and D-glyceraldehyde produces 2-dehydro-3-deoxy-L-galactonate as the major product. Has weak activity with hydroxypyruvate and D-glyceraldehyde. This chain is Hydroxypyruvate/pyruvate aldolase, found in Chromohalobacter salexigens (strain ATCC BAA-138 / DSM 3043 / CIP 106854 / NCIMB 13768 / 1H11).